Reading from the N-terminus, the 494-residue chain is Acetyl-coenzyme A carboxylase carboxyl transferase subunit beta, chloroplastic (494 aa).

Residues 226–494 enclose the CoA carboxyltransferase N-terminal domain; sequence LWVQCENCYG…VPLNQNETEH (269 aa). Residues Cys230, Cys233, Cys249, and Cys252 each coordinate Zn(2+). The segment at 230 to 252 adopts a C4-type zinc-finger fold; the sequence is CENCYGLNYKKFLKSKMNICEQC.

It belongs to the AccD/PCCB family. As to quaternary structure, acetyl-CoA carboxylase is a heterohexamer composed of biotin carboxyl carrier protein, biotin carboxylase and 2 subunits each of ACCase subunit alpha and ACCase plastid-coded subunit beta (accD). The cofactor is Zn(2+).

Its subcellular location is the plastid. It is found in the chloroplast stroma. The enzyme catalyses N(6)-carboxybiotinyl-L-lysyl-[protein] + acetyl-CoA = N(6)-biotinyl-L-lysyl-[protein] + malonyl-CoA. It participates in lipid metabolism; malonyl-CoA biosynthesis; malonyl-CoA from acetyl-CoA: step 1/1. Component of the acetyl coenzyme A carboxylase (ACC) complex. Biotin carboxylase (BC) catalyzes the carboxylation of biotin on its carrier protein (BCCP) and then the CO(2) group is transferred by the transcarboxylase to acetyl-CoA to form malonyl-CoA. The sequence is that of Acetyl-coenzyme A carboxylase carboxyl transferase subunit beta, chloroplastic from Coffea arabica (Arabian coffee).